The primary structure comprises 697 residues: Sialic acid-binding Ig-like lectin 10 (697 aa).

A signal peptide spans 1–16 (MLLPLLLSSLLGGSQA). Over 17–550 (MDGRFWIRVQ…KGLISTAFSN (534 aa)) the chain is Extracellular. The region spanning 18–121 (DGRFWIRVQE…DESQYFFRVE (104 aa)) is the Ig-like V-type domain. 4 disulfide bridges follow: Cys36–Cys173, Cys41–Cys101, Cys164–Cys215, and Cys276–Cys323. An N-linked (GlcNAc...) asparagine glycan is attached at Asn100. Arg119 is a binding site for N-acetylneuraminate. Ig-like C2-type domains are found at residues 146–231 (PDVY…RTVR), 251–339 (PALE…LDLS), and 344–441 (PENL…LSLS). N-linked (GlcNAc...) asparagine glycosylation is found at Asn355 and Asn364. The cysteines at positions 380 and 425 are disulfide-linked. N-linked (GlcNAc...) asparagine glycans are attached at residues Asn486 and Asn504. Residues 551 to 571 (GAFLGIGITALLFLCLALIIM) traverse the membrane as a helical segment. Residues 572–697 (KILPKRRTQT…QADYAEVKFQ (126 aa)) are Cytoplasmic-facing. The ITIM motif 1 motif lies at 595-600 (LDYINV). The interval 606 to 697 (PLAQKRNQKA…QADYAEVKFQ (92 aa)) is disordered. Residues 620 to 629 (PRTPLPPGAP) show a composition bias toward pro residues. Polar residues predominate over residues 650 to 659 (KSSTQAPESQ). The ITIM motif 2 motif lies at 665-670 (LHYATL). Position 667 is a phosphotyrosine (Tyr667).

It belongs to the immunoglobulin superfamily. SIGLEC (sialic acid binding Ig-like lectin) family. As to quaternary structure, interacts with PTPN6/SHP-1 upon phosphorylation. Interacts with NCF1. Interacts with CD24; the probable CD24:SIGLEC10 complex is proposed to inhibit HGMB1-mediated tissue damage immune response. Interacts with HMGB1; the interaction is dependent on CD24. Interacts with RIGI, CBL and PTPN11. Phosphorylation of Tyr-667 is involved in binding to PTPN6. In terms of tissue distribution, expressed by peripheral blood leukocytes (eosinophils, monocytes and a natural killer cell subpopulation). Isoform 5 is found to be the most abundant isoform. Found in lymph node, lung, ovary and appendix. Isoform 1 is found at high levels and isoform 2 at lower levels in bone marrow, spleen and spinal cord. Isoform 2 is also found in brain. Isoform 4 is specifically found in natural killer cells.

It localises to the cell membrane. Its subcellular location is the secreted. Putative adhesion molecule that mediates sialic-acid dependent binding to cells. Preferentially binds to alpha-2,3- or alpha-2,6-linked sialic acid. The sialic acid recognition site may be masked by cis interactions with sialic acids on the same cell surface. In the immune response, seems to act as an inhibitory receptor upon ligand induced tyrosine phosphorylation by recruiting cytoplasmic phosphatase(s) via their SH2 domain(s) that block signal transduction through dephosphorylation of signaling molecules. Involved in negative regulation of B-cell antigen receptor signaling. The inhibition of B cell activation is dependent on PTPN6/SHP-1. In association with CD24 may be involved in the selective suppression of the immune response to danger-associated molecular patterns (DAMPs) such as HMGB1, HSP70 and HSP90. In association with CD24 may regulate the immune repsonse of natural killer (NK) cells. Plays a role in the control of autoimmunity. During initiation of adaptive immune responses by CD8-alpha(+) dendritic cells inhibits cross-presentation by impairing the formation of MHC class I-peptide complexes. The function seems to implicate recruitment of PTPN6/SHP-1, which dephosphorylates NCF1 of the NADPH oxidase complex consequently promoting phagosomal acidification. The protein is Sialic acid-binding Ig-like lectin 10 (SIGLEC10) of Homo sapiens (Human).